A 104-amino-acid polypeptide reads, in one-letter code: L-rhamnose mutarotase (104 aa).

Residue tyrosine 18 participates in substrate binding. Histidine 22 functions as the Proton donor in the catalytic mechanism. Residues tyrosine 41 and 76–77 (WW) each bind substrate.

The protein belongs to the rhamnose mutarotase family. Homodimer.

Its subcellular location is the cytoplasm. The catalysed reaction is alpha-L-rhamnose = beta-L-rhamnose. The protein operates within carbohydrate metabolism; L-rhamnose metabolism. Functionally, involved in the anomeric conversion of L-rhamnose. The chain is L-rhamnose mutarotase from Shouchella clausii (strain KSM-K16) (Alkalihalobacillus clausii).